We begin with the raw amino-acid sequence, 1583 residues long: Methyl-CpG-binding domain protein 5/6 homolog sba (1583 aa).

The segment at Ala81–Gly115 is disordered. Positions His83–Gln104 are enriched in low complexity. The MBD domain maps to Arg238 to Pro308. Disordered regions lie at residues Asn427–Gln457, Glu556–Leu579, Val630–Val694, Ala839–Ser862, Pro940–Gln980, Val1179–Cys1247, and Gln1287–Leu1339. Residues Pro430–Pro439 are compositionally biased toward low complexity. A compositionally biased stretch (pro residues) spans Thr440–His449. The span at Gln563–Leu579 shows a compositional bias: low complexity. The span at Ala658–Val677 shows a compositional bias: polar residues. Composition is skewed to low complexity over residues Ser679 to Gln693 and Val851 to Ser862. Polar residues-rich tracts occupy residues Val1179–Cys1195, Cys1216–Thr1240, and Gln1287–Thr1313. A compositionally biased stretch (low complexity) spans Arg1323–Ser1333. A PWWP domain is found at Ile1346 to Gly1408. Residues Ala1415–Ser1446 are a coiled coil. The interval Ile1471 to Ile1497 is disordered. Residues Gln1474 to Gln1488 are compositionally biased toward low complexity.

Component of the polycomb repressive deubiquitinase (PR-DUB) complex, at least composed of caly/calypso, Asx and sba (MDB5/6 homolog). Interacts (via MBD domain) with Asx (via PHD domain); the interaction is important for the stability of the PR-DUB complex.

In terms of biological role, non-catalytic component of the polycomb repressive deubiquitinase (PR-DUB) complex, a complex that specifically mediates deubiquitination of histone H2A monoubiquitinated at 'Lys-119' (H2AK118ub1). Important for maintaining stability of the PR-DUB complex. Probable epigenetic regulator involved in developmental pattern formation and eye development. This chain is Methyl-CpG-binding domain protein 5/6 homolog sba, found in Drosophila melanogaster (Fruit fly).